The following is a 125-amino-acid chain: Succinate dehydrogenase cytochrome b560 subunit (125 aa).

Helical transmembrane passes span Ile-29–Thr-49, Ile-68–Ile-88, and Ile-104–Ile-124. His-83 contributes to the heme binding site.

Belongs to the cytochrome b560 family. As to quaternary structure, forms part of complex II containing four subunits: a 70 kDa flavoprotein (FP), a 27 kDa iron-sulfur protein (IP), a cytochrome B and a membrane-anchoring protein. Heme serves as cofactor.

It is found in the mitochondrion inner membrane. Its pathway is carbohydrate metabolism; tricarboxylic acid cycle. Its function is as follows. Membrane-anchoring subunit of succinate dehydrogenase (SDH) that is involved in complex II of the mitochondrial electron transport chain and is responsible for transferring electrons from succinate to ubiquinone (coenzyme Q). The polypeptide is Succinate dehydrogenase cytochrome b560 subunit (SDH3) (Porphyra purpurea (Red seaweed)).